The chain runs to 752 residues: Phosphoribosylformylglycinamidine synthase subunit PurL (752 aa).

Residue H58 is part of the active site. ATP-binding residues include Y61 and K103. E105 is a binding site for Mg(2+). Substrate contacts are provided by residues 106 to 109 (SHNH) and R128. H107 acts as the Proton acceptor in catalysis. Residue D129 participates in Mg(2+) binding. Residue Q253 participates in substrate binding. Residue D281 participates in Mg(2+) binding. 325–327 (ESQ) contributes to the substrate binding site. ATP-binding residues include D513 and G550. N551 is a binding site for Mg(2+). S553 contacts substrate.

This sequence belongs to the FGAMS family. In terms of assembly, monomer. Part of the FGAM synthase complex composed of 1 PurL, 1 PurQ and 2 PurS subunits.

Its subcellular location is the cytoplasm. It catalyses the reaction N(2)-formyl-N(1)-(5-phospho-beta-D-ribosyl)glycinamide + L-glutamine + ATP + H2O = 2-formamido-N(1)-(5-O-phospho-beta-D-ribosyl)acetamidine + L-glutamate + ADP + phosphate + H(+). It functions in the pathway purine metabolism; IMP biosynthesis via de novo pathway; 5-amino-1-(5-phospho-D-ribosyl)imidazole from N(2)-formyl-N(1)-(5-phospho-D-ribosyl)glycinamide: step 1/2. Its function is as follows. Part of the phosphoribosylformylglycinamidine synthase complex involved in the purines biosynthetic pathway. Catalyzes the ATP-dependent conversion of formylglycinamide ribonucleotide (FGAR) and glutamine to yield formylglycinamidine ribonucleotide (FGAM) and glutamate. The FGAM synthase complex is composed of three subunits. PurQ produces an ammonia molecule by converting glutamine to glutamate. PurL transfers the ammonia molecule to FGAR to form FGAM in an ATP-dependent manner. PurS interacts with PurQ and PurL and is thought to assist in the transfer of the ammonia molecule from PurQ to PurL. In Streptomyces coelicolor (strain ATCC BAA-471 / A3(2) / M145), this protein is Phosphoribosylformylglycinamidine synthase subunit PurL.